Here is a 76-residue protein sequence, read N- to C-terminus: Putative antitoxin VapB2 (76 aa).

It belongs to the UPF0330 family.

In terms of biological role, possibly the antitoxin component of a type II toxin-antitoxin (TA) system. Its cognate toxin is VapC2 (Potential). The polypeptide is Putative antitoxin VapB2 (vapB2) (Pyrococcus abyssi (strain GE5 / Orsay)).